A 236-amino-acid chain; its full sequence is Orotidine 5'-phosphate decarboxylase (236 aa).

Residues Asp14, Lys36, 63 to 72 (DLKFHDIPNT), Thr122, Arg183, Gln192, Gly212, and Arg213 contribute to the substrate site. Lys65 functions as the Proton donor in the catalytic mechanism.

It belongs to the OMP decarboxylase family. Type 1 subfamily. Homodimer.

The enzyme catalyses orotidine 5'-phosphate + H(+) = UMP + CO2. It functions in the pathway pyrimidine metabolism; UMP biosynthesis via de novo pathway; UMP from orotate: step 2/2. Its function is as follows. Catalyzes the decarboxylation of orotidine 5'-monophosphate (OMP) to uridine 5'-monophosphate (UMP). The protein is Orotidine 5'-phosphate decarboxylase of Chromohalobacter salexigens (strain ATCC BAA-138 / DSM 3043 / CIP 106854 / NCIMB 13768 / 1H11).